The chain runs to 360 residues: Putative F-box protein At3g47150 (360 aa).

The F-box domain maps to 6-56; it reads NTTQIYIPLDLQINILLRLPVKSLLRFRCVSKLWCSIITSHDFRNRHFNIT.

This is Putative F-box protein At3g47150 from Arabidopsis thaliana (Mouse-ear cress).